A 279-amino-acid polypeptide reads, in one-letter code: Thymidylate synthase (279 aa).

R21 is a binding site for dUMP. H51 contacts (6R)-5,10-methylene-5,6,7,8-tetrahydrofolate. 126–127 contributes to the dUMP binding site; sequence RR. Catalysis depends on C159, which acts as the Nucleophile. DUMP contacts are provided by residues 179–182, N190, and 220–222; these read RSAD and HLY. A (6R)-5,10-methylene-5,6,7,8-tetrahydrofolate-binding site is contributed by D182. A278 contacts (6R)-5,10-methylene-5,6,7,8-tetrahydrofolate.

Belongs to the thymidylate synthase family. Bacterial-type ThyA subfamily. In terms of assembly, homodimer.

It localises to the cytoplasm. The enzyme catalyses dUMP + (6R)-5,10-methylene-5,6,7,8-tetrahydrofolate = 7,8-dihydrofolate + dTMP. It participates in pyrimidine metabolism; dTTP biosynthesis. Functionally, catalyzes the reductive methylation of 2'-deoxyuridine-5'-monophosphate (dUMP) to 2'-deoxythymidine-5'-monophosphate (dTMP) while utilizing 5,10-methylenetetrahydrofolate (mTHF) as the methyl donor and reductant in the reaction, yielding dihydrofolate (DHF) as a by-product. This enzymatic reaction provides an intracellular de novo source of dTMP, an essential precursor for DNA biosynthesis. This Marinobacter nauticus (strain ATCC 700491 / DSM 11845 / VT8) (Marinobacter aquaeolei) protein is Thymidylate synthase.